A 180-amino-acid polypeptide reads, in one-letter code: MSRIGRLPIKIPDTVKIDVKGNLVIVEGTRGKLVQDIKDSINVKVENGSVIVNRAFNDKKTKAYHGLYRSLIFNMVKGVTEGFSKSLTINGIGYRVEQQGNSLFLNLGYSTQFEYVVPDGVSVKLDGNTKISVEGIDKFKVGQVAAEIRSLKKPEPYKGKGIKYDNEVIRRKVGKSGVKK.

This sequence belongs to the universal ribosomal protein uL6 family. In terms of assembly, part of the 50S ribosomal subunit.

This protein binds to the 23S rRNA, and is important in its secondary structure. It is located near the subunit interface in the base of the L7/L12 stalk, and near the tRNA binding site of the peptidyltransferase center. The chain is Large ribosomal subunit protein uL6 from Borrelia garinii subsp. bavariensis (strain ATCC BAA-2496 / DSM 23469 / PBi) (Borreliella bavariensis).